The primary structure comprises 621 residues: (-)-beta-phellandrene synthase 1, chloroplastic (621 aa).

The transit peptide at 1-49 (MALALVSVAPLVSMRRSLFSSPYELKSIDKTIPNLVMCRKRMLGRPSIR) directs the protein to the chloroplast. Mg(2+)-binding residues include Asp-372, Asp-376, and Asp-524. Positions 372–376 (DDIYD) match the DDXXD motif motif.

The protein belongs to the terpene synthase family. Tpsd subfamily. The cofactor is Mg(2+). Mn(2+) serves as cofactor.

The protein localises to the plastid. The protein resides in the chloroplast. The enzyme catalyses (2E)-geranyl diphosphate = (-)-beta-phellandrene + diphosphate. It participates in terpene metabolism; oleoresin biosynthesis. Its pathway is secondary metabolite biosynthesis; terpenoid biosynthesis. Monoterpene synthase (TPS) involved in the biosynthesis of monoterpene natural products included in conifer oleoresin secretions and volatile emissions; these compounds contribute to biotic and abiotic stress defense against herbivores and pathogens. Catalyzes the conversion of (2E)-geranyl diphosphate (GPP) to (-)-beta-phellandrene. The polypeptide is (-)-beta-phellandrene synthase 1, chloroplastic (Pinus banksiana (Jack pine)).